Consider the following 213-residue polypeptide: Probable nicotinate-nucleotide adenylyltransferase (213 aa).

Belongs to the NadD family.

It catalyses the reaction nicotinate beta-D-ribonucleotide + ATP + H(+) = deamido-NAD(+) + diphosphate. The protein operates within cofactor biosynthesis; NAD(+) biosynthesis; deamido-NAD(+) from nicotinate D-ribonucleotide: step 1/1. Functionally, catalyzes the reversible adenylation of nicotinate mononucleotide (NaMN) to nicotinic acid adenine dinucleotide (NaAD). The protein is Probable nicotinate-nucleotide adenylyltransferase of Trichlorobacter lovleyi (strain ATCC BAA-1151 / DSM 17278 / SZ) (Geobacter lovleyi).